The sequence spans 286 residues: UDP-3-O-acyl-N-acetylglucosamine deacetylase (286 aa).

Zn(2+) is bound by residues H79, H237, and D241. The active-site Proton donor is the H264.

This sequence belongs to the LpxC family. Zn(2+) serves as cofactor.

The enzyme catalyses a UDP-3-O-[(3R)-3-hydroxyacyl]-N-acetyl-alpha-D-glucosamine + H2O = a UDP-3-O-[(3R)-3-hydroxyacyl]-alpha-D-glucosamine + acetate. Its pathway is glycolipid biosynthesis; lipid IV(A) biosynthesis; lipid IV(A) from (3R)-3-hydroxytetradecanoyl-[acyl-carrier-protein] and UDP-N-acetyl-alpha-D-glucosamine: step 2/6. Catalyzes the hydrolysis of UDP-3-O-myristoyl-N-acetylglucosamine to form UDP-3-O-myristoylglucosamine and acetate, the committed step in lipid A biosynthesis. This Brucella melitensis biotype 2 (strain ATCC 23457) protein is UDP-3-O-acyl-N-acetylglucosamine deacetylase.